The sequence spans 179 residues: UPF0227 protein Ssed_2836 (179 aa).

The protein belongs to the UPF0227 family.

This chain is UPF0227 protein Ssed_2836, found in Shewanella sediminis (strain HAW-EB3).